Consider the following 718-residue polypeptide: 1-deoxy-D-xylulose-5-phosphate synthase 1, chloroplastic (718 aa).

The transit peptide at 1–55 directs the protein to the chloroplast; it reads MAFCALSFPAHISRATTPAPSDLQKSSSFSSRFYWGADLLRPSQYKVRKIQSGVY. Residues H143 and 184 to 186 each bind thiamine diphosphate; that span reads GHS. D215 lines the Mg(2+) pocket. Thiamine diphosphate contacts are provided by residues 216–217, N244, Y365, and E447; that span reads GA. Position 244 (N244) interacts with Mg(2+).

Belongs to the transketolase family. DXPS subfamily. As to quaternary structure, homodimer. The cofactor is Mg(2+). Thiamine diphosphate is required as a cofactor. As to expression, expressed in trichomes, leaves, flowers, roots and stems.

It is found in the plastid. The protein localises to the chloroplast. The enzyme catalyses D-glyceraldehyde 3-phosphate + pyruvate + H(+) = 1-deoxy-D-xylulose 5-phosphate + CO2. Its pathway is metabolic intermediate biosynthesis; 1-deoxy-D-xylulose 5-phosphate biosynthesis; 1-deoxy-D-xylulose 5-phosphate from D-glyceraldehyde 3-phosphate and pyruvate: step 1/1. Its function is as follows. Catalyzes the acyloin condensation reaction between C atoms 2 and 3 of pyruvate and glyceraldehyde 3-phosphate to yield 1-deoxy-D-xylulose-5-phosphate (DXP). The polypeptide is 1-deoxy-D-xylulose-5-phosphate synthase 1, chloroplastic (Cannabis sativa (Hemp)).